We begin with the raw amino-acid sequence, 100 residues long: Integration host factor subunit alpha (100 aa).

Residues 54–73 (DLRDKRQRPGRNPKTGEEIP) are disordered.

This sequence belongs to the bacterial histone-like protein family. As to quaternary structure, heterodimer of an alpha and a beta chain.

This protein is one of the two subunits of integration host factor, a specific DNA-binding protein that functions in genetic recombination as well as in transcriptional and translational control. The polypeptide is Integration host factor subunit alpha (Pseudomonas aeruginosa (strain UCBPP-PA14)).